The primary structure comprises 81 residues: Photosystem I iron-sulfur center (81 aa).

4Fe-4S ferredoxin-type domains follow at residues 2–31 (SHAV…MVPW) and 37–68 (GQIA…IRVY). Positions 11, 14, 17, 21, 48, 51, 54, and 58 each coordinate [4Fe-4S] cluster.

The cyanobacterial PSI reaction center is composed of one copy each of PsaA,B,C,D,E,F,I,J,K,L,M and X, and forms trimeric complexes. It depends on [4Fe-4S] cluster as a cofactor.

It is found in the cellular thylakoid membrane. The catalysed reaction is reduced [plastocyanin] + hnu + oxidized [2Fe-2S]-[ferredoxin] = oxidized [plastocyanin] + reduced [2Fe-2S]-[ferredoxin]. Its function is as follows. Apoprotein for the two 4Fe-4S centers FA and FB of photosystem I (PSI); essential for photochemical activity. FB is the terminal electron acceptor of PSI, donating electrons to ferredoxin. The C-terminus interacts with PsaA/B/D and helps assemble the protein into the PSI complex. Required for binding of PsaD and PsaE to PSI. PSI is a plastocyanin/cytochrome c6-ferredoxin oxidoreductase, converting photonic excitation into a charge separation, which transfers an electron from the donor P700 chlorophyll pair to the spectroscopically characterized acceptors A0, A1, FX, FA and FB in turn. This Prochlorococcus marinus subsp. pastoris (strain CCMP1986 / NIES-2087 / MED4) protein is Photosystem I iron-sulfur center.